The chain runs to 107 residues: Iron-binding protein IscA (107 aa).

The Fe cation site is built by C35, C99, and C101.

Belongs to the HesB/IscA family. Homodimer; may form tetramers and higher multimers. It depends on Fe cation as a cofactor.

In terms of biological role, is able to transfer iron-sulfur clusters to apo-ferredoxin. Multiple cycles of [2Fe2S] cluster formation and transfer are observed, suggesting that IscA acts catalytically. Recruits intracellular free iron so as to provide iron for the assembly of transient iron-sulfur cluster in IscU in the presence of IscS, L-cysteine and the thioredoxin reductase system TrxA/TrxB. The polypeptide is Iron-binding protein IscA (Yersinia pestis bv. Antiqua (strain Angola)).